Here is a 214-residue protein sequence, read N- to C-terminus: Thymidylate kinase (214 aa).

7 to 14 (GIDGAGKS) lines the ATP pocket.

The protein belongs to the thymidylate kinase family.

It catalyses the reaction dTMP + ATP = dTDP + ADP. Functionally, phosphorylation of dTMP to form dTDP in both de novo and salvage pathways of dTTP synthesis. This is Thymidylate kinase from Chlorobaculum tepidum (strain ATCC 49652 / DSM 12025 / NBRC 103806 / TLS) (Chlorobium tepidum).